Consider the following 188-residue polypeptide: MKAIDNKIEQFALYLQRKNNLDHIQFLKVRLGLQVVVSNLAKTIVTYGVALIFHTFLYTLFTHVSYFLVRRYAHGAHAKSSLLCHVQNLALFVALPWLLVYFQVNLGIMYSVVAIGTVLIIYYAPSATKKQPIPSHLKMKKKLLSIIITMVLLIISFLAPEPFKQLILLGITLESITLLPIFFPREDN.

The next 4 helical transmembrane spans lie at 49-69 (VALIFHTFLYTLFTHVSYFLV), 100-122 (VYFQVNLGIMYSVVAIGTVLIIY), 143-163 (LLSIIITMVLLIISFLAPEPF), and 164-184 (KQLILLGITLESITLLPIFFP).

Belongs to the AgrB family.

The protein localises to the cell membrane. Essential for the production of a quorum sensing system signal molecule, the autoinducing peptide (AIP). This quorum sensing system is responsible for the regulation of the expression of virulence factor genes. Involved in the proteolytic processing of AgrD, the precursor of AIP. This is Accessory gene regulator protein B from Staphylococcus haemolyticus (strain JCSC1435).